Here is a 311-residue protein sequence, read N- to C-terminus: Probable lipid kinase YegS-like (311 aa).

The region spanning 9 to 140 is the DAGKc domain; the sequence is EHDGDTWLIL…VDVGTLGDDY (132 aa). ATP is bound by residues Thr47, 73 to 79, and Ser102; that span reads GDGTVNE. Mg(2+) is bound by residues Lys221, Asp224, and Leu226. The active-site Proton acceptor is the Glu281.

The protein belongs to the diacylglycerol/lipid kinase family. YegS lipid kinase subfamily. Mg(2+) serves as cofactor. Ca(2+) is required as a cofactor.

The protein resides in the cytoplasm. Probably phosphorylates lipids; the in vivo substrate is unknown. The polypeptide is Probable lipid kinase YegS-like (Chromohalobacter salexigens (strain ATCC BAA-138 / DSM 3043 / CIP 106854 / NCIMB 13768 / 1H11)).